A 492-amino-acid polypeptide reads, in one-letter code: Cytochrome P450 2A1 (492 aa).

Serine 130 carries the phosphoserine modification. Cysteine 437 is a heme binding site.

This sequence belongs to the cytochrome P450 family. Requires heme as cofactor. In terms of tissue distribution, liver and testis.

It localises to the endoplasmic reticulum membrane. Its subcellular location is the microsome membrane. It carries out the reaction an organic molecule + reduced [NADPH--hemoprotein reductase] + O2 = an alcohol + oxidized [NADPH--hemoprotein reductase] + H2O + H(+). Its function is as follows. Highly active in the 7-alpha-hydroxylation of testosterone, progesterone and androstenedione. The protein is Cytochrome P450 2A1 (Cyp2a1) of Rattus norvegicus (Rat).